The following is a 66-amino-acid chain: Large ribosomal subunit protein bL35 (66 aa).

Belongs to the bacterial ribosomal protein bL35 family.

The chain is Large ribosomal subunit protein bL35 from Wigglesworthia glossinidia brevipalpis.